Here is a 459-residue protein sequence, read N- to C-terminus: Cysteine--tRNA ligase (459 aa).

Cysteine 31 provides a ligand contact to Zn(2+). The short motif at 33–43 is the 'HIGH' region element; sequence PTVYYNPHIGN. Zn(2+) contacts are provided by cysteine 216, histidine 241, and glutamate 245. The 'KMSKS' region motif lies at 274–278; it reads KMSKS. Lysine 277 serves as a coordination point for ATP.

Belongs to the class-I aminoacyl-tRNA synthetase family. As to quaternary structure, monomer. It depends on Zn(2+) as a cofactor.

The protein resides in the cytoplasm. The catalysed reaction is tRNA(Cys) + L-cysteine + ATP = L-cysteinyl-tRNA(Cys) + AMP + diphosphate. The chain is Cysteine--tRNA ligase from Rickettsia africae (strain ESF-5).